The primary structure comprises 1173 residues: Tectonin beta-propeller repeat-containing protein 1 (1173 aa).

4 TECPR repeats span residues Leu-209 to Glu-240, Asp-254 to Glu-285, Asn-301 to Val-332, and Asp-344 to Val-376. A disordered region spans residues Ile-403–Pro-489. Residues Ser-409–Glu-422 show a composition bias toward low complexity. Residues Ser-424–Ser-434 show a composition bias toward polar residues. A PH domain is found at Val-609–Tyr-718. TECPR repeat units follow at residues Gln-730–Arg-757, Ile-952–Gly-983, Leu-997–Pro-1028, Thr-1043–Ser-1074, and Asp-1086–Ile-1126. The segment at Gln-1147–Cys-1173 is disordered.

Belongs to the TECPR1 family.

The protein resides in the cytoplasmic vesicle. It localises to the autophagosome membrane. The protein localises to the lysosome membrane. In terms of biological role, tethering factor involved in autophagy. Involved in autophagosome maturation by promoting the autophagosome fusion with lysosomes. Binds phosphatidylinositol-3-phosphate (PtdIns(3)P) present at the surface of autophagosomes. In Xenopus tropicalis (Western clawed frog), this protein is Tectonin beta-propeller repeat-containing protein 1 (tecpr1).